A 189-amino-acid polypeptide reads, in one-letter code: MSQVIIAIILLGLLALAFGALLGYAAEKFKVEGDPIIDQAEALLPQTQCGQCGYPGCRPYAEAIANGEKINKCPPGGTATMEKLAELMGVDPEPLTANAETQVKKVAFIREAECIGCTKCIQACPVDAILGTGKQMHTVITDYCTGCDLCVEPCPVDCIDMIPVAETLQNWSWQLNAIPVVNISEESKC.

The tract at residues 1–26 (MSQVIIAIILLGLLALAFGALLGYAA) is hydrophobic. The 59-residue stretch at 32-90 (EGDPIIDQAEALLPQTQCGQCGYPGCRPYAEAIANGEKINKCPPGGTATMEKLAELMGV) folds into the 4Fe-4S domain. Positions 49, 52, 57, 73, 114, 117, 120, 124, 144, 147, 150, and 154 each coordinate [4Fe-4S] cluster. 4Fe-4S ferredoxin-type domains are found at residues 105 to 134 (KVAFIREAECIGCTKCIQACPVDAILGTGK) and 135 to 164 (QMHTVITDYCTGCDLCVEPCPVDCIDMIPV).

This sequence belongs to the 4Fe4S bacterial-type ferredoxin family. RnfB subfamily. The complex is composed of six subunits: RnfA, RnfB, RnfC, RnfD, RnfE and RnfG. It depends on [4Fe-4S] cluster as a cofactor.

The protein resides in the cell inner membrane. In terms of biological role, part of a membrane-bound complex that couples electron transfer with translocation of ions across the membrane. This is Ion-translocating oxidoreductase complex subunit B from Shewanella loihica (strain ATCC BAA-1088 / PV-4).